A 118-amino-acid polypeptide reads, in one-letter code: Light-harvesting protein B-800/850 gamma chain (118 aa).

Seems to be required for the LH-II stabilization. This Rhodobacter capsulatus (Rhodopseudomonas capsulata) protein is Light-harvesting protein B-800/850 gamma chain (pucE).